Reading from the N-terminus, the 423-residue chain is Subtilisin-like protease 2 (423 aa).

A signal peptide spans 1 to 17 (MQLLNLGLLLLLPFVAG). A propeptide spanning residues 18–123 (EIAPQPEPLR…VHPDQHVYLA (106 aa)) is cleaved from the precursor. The Inhibitor I9 domain maps to 37-123 (QYIVTLKEGL…VHPDQHVYLA (87 aa)). Residues 132 to 423 (RWGLGYMSSK…RKFTLPKNTK (292 aa)) enclose the Peptidase S8 domain. Active-site charge relay system residues include Asp170 and His202. 3 N-linked (GlcNAc...) asparagine glycosylation sites follow: Asn249, Asn262, and Asn349. Ser358 acts as the Charge relay system in catalysis. A glycan (N-linked (GlcNAc...) asparagine) is linked at Asn389.

This sequence belongs to the peptidase S8 family.

It is found in the secreted. In terms of biological role, secreted subtilisin-like serine protease with keratinolytic activity that contributes to pathogenicity. The chain is Subtilisin-like protease 2 (SUB2) from Arthroderma otae (strain ATCC MYA-4605 / CBS 113480) (Microsporum canis).